We begin with the raw amino-acid sequence, 83 residues long: Kunitz-type serine protease inhibitor homolog beta-bungarotoxin B5 chain (83 aa).

The first 24 residues, 1–24, serve as a signal peptide directing secretion; that stretch reads MSSGGLLLLLGLLTFCAELTPVSS. The BPTI/Kunitz inhibitor domain maps to 31–81; it reads CNLPPDPGPCHDNKFAFYHHPASNKCKEFVYGGCGGNDNRFKTRNKCQCTC. Intrachain disulfides connect cysteine 31-cysteine 81, cysteine 40-cysteine 64, and cysteine 56-cysteine 77.

It belongs to the venom Kunitz-type family. As to quaternary structure, heterodimer; disulfide-linked. The A chains have phospholipase A2 activity and the B chains show homology with the basic protease inhibitors. As to expression, expressed by the venom gland.

The protein localises to the secreted. In terms of biological role, beta-bungarotoxins are presynaptic neurotoxins of the venom. The B chain is homologous to venom basic protease inhibitors but has no protease inhibitor activity and blocks voltage-gated potassium channels (Kv). In Bungarus multicinctus (Many-banded krait), this protein is Kunitz-type serine protease inhibitor homolog beta-bungarotoxin B5 chain.